The following is a 703-amino-acid chain: Fanconi anemia group B protein homolog (703 aa).

Belongs to the multisubunit FA complex composed of FANCA, FANCB, FANCC, FANCE, FANCF, FANCG, FANCL/PHF9 and FANCM.

The protein localises to the nucleus. In terms of biological role, DNA repair protein required for FANCD2 ubiquitination. In Mus musculus (Mouse), this protein is Fanconi anemia group B protein homolog (Fancb).